We begin with the raw amino-acid sequence, 139 residues long: Putative pre-16S rRNA nuclease (139 aa).

The protein belongs to the YqgF nuclease family.

The protein resides in the cytoplasm. Its function is as follows. Could be a nuclease involved in processing of the 5'-end of pre-16S rRNA. The polypeptide is Putative pre-16S rRNA nuclease (Streptococcus pyogenes serotype M49 (strain NZ131)).